A 247-amino-acid chain; its full sequence is Submandibular gland secretory Glx-rich protein CB (247 aa).

Residues 1-18 (MLVVLLTAALLALSSAQG) form the signal peptide. The segment at 14-219 (SSAQGTDEEV…PQHYRGRPPK (206 aa)) is disordered. Low complexity-rich tracts occupy residues 39 to 50 (PVDSGSDPPSAD), 58 to 71 (EGES…EPPA), 81 to 93 (QQEP…QEPP), 104 to 116 (QQEP…QEPP), 126 to 139 (QQQQ…QEPP), 150 to 159 (QQESTQAENQ), and 178 to 196 (VESP…QQTN). A run of 5 repeats spans residues 67 to 89 (EEPP…QAEN), 90 to 112 (QEPP…QAEN), 113 to 135 (QEPP…QAEN), 136 to 158 (QEPP…QAEN), and 159 to 181 (QEPS…VESP). The interval 67 to 181 (EEPPATSGSE…QPEEGNVESP (115 aa)) is 5 X 23 AA tandem repeats. Residues 197–212 (PEEKPPAPKTQEEPQH) show a composition bias toward basic and acidic residues.

As to expression, submandibular gland acinar cells.

The protein localises to the secreted. Functionally, GRP proteins have a marked affinity for hydroxyapatite. They may play a role in the formation of the protective acquired pellicle at the saliva-tooth interface. The protein is Submandibular gland secretory Glx-rich protein CB (Grpcb) of Rattus norvegicus (Rat).